The primary structure comprises 522 residues: Light-independent protochlorophyllide reductase subunit B (522 aa).

A [4Fe-4S] cluster-binding site is contributed by Asp-36. Asp-290 functions as the Proton donor in the catalytic mechanism. Gly-425–Leu-426 provides a ligand contact to substrate.

The protein belongs to the ChlB/BchB/BchZ family. Protochlorophyllide reductase is composed of three subunits; ChlL, ChlN and ChlB. Forms a heterotetramer of two ChlB and two ChlN subunits. It depends on [4Fe-4S] cluster as a cofactor.

It catalyses the reaction chlorophyllide a + oxidized 2[4Fe-4S]-[ferredoxin] + 2 ADP + 2 phosphate = protochlorophyllide a + reduced 2[4Fe-4S]-[ferredoxin] + 2 ATP + 2 H2O. It participates in porphyrin-containing compound metabolism; chlorophyll biosynthesis (light-independent). Component of the dark-operative protochlorophyllide reductase (DPOR) that uses Mg-ATP and reduced ferredoxin to reduce ring D of protochlorophyllide (Pchlide) to form chlorophyllide a (Chlide). This reaction is light-independent. The NB-protein (ChlN-ChlB) is the catalytic component of the complex. In Synechococcus sp. (strain CC9311), this protein is Light-independent protochlorophyllide reductase subunit B.